Reading from the N-terminus, the 1187-residue chain is ATP-dependent DNA helicase MPH1 (1187 aa).

Positions 144–311 (IVERAFYDNL…QIIDNLNISK (168 aa)) constitute a Helicase ATP-binding domain. 157–164 (LPTGLGKT) provides a ligand contact to ATP. Positions 259–262 (DEAH) match the DEAH box motif. The Helicase C-terminal domain maps to 486–681 (ELDDFFKNHE…FIQLRPQHRM (196 aa)). Disordered regions lie at residues 542–576 (VENF…MTGM), 781–848 (DKLV…NNQV), and 941–1003 (PEKP…LGVK). Basic residues predominate over residues 547–556 (KKKQKGQTKK). Residues 564–576 (TRSSSENAQMTGM) are compositionally biased toward polar residues. Over residues 781–817 (DKLVDSDSESEVDKENENVIQEVDKSKNQEQNDHIIT) the composition is skewed to basic and acidic residues. Polar residues predominate over residues 822-848 (TEQSVAGNTKSTTNGTSYSEPENNNQV). Over residues 967-977 (SNSISIPSSTT) the composition is skewed to low complexity. A compositionally biased stretch (basic and acidic residues) spans 980 to 989 (SHNEVTRKVV).

The protein belongs to the DEAD box helicase family. DEAH subfamily. FANCM sub-subfamily. In terms of assembly, interacts with the MHF histone-fold complex to form the FANCM-MHF complex.

The protein resides in the nucleus. The catalysed reaction is ATP + H2O = ADP + phosphate + H(+). In terms of biological role, ATP-dependent DNA helicase involved in DNA damage repair by homologous recombination and in genome maintenance. Capable of unwinding D-loops. Plays a role in limiting crossover recombinants during mitotic DNA double-strand break (DSB) repair. Component of a FANCM-MHF complex which promotes gene conversion at blocked replication forks, probably by reversal of the stalled fork. This chain is ATP-dependent DNA helicase MPH1, found in Candida albicans (strain SC5314 / ATCC MYA-2876) (Yeast).